A 307-amino-acid polypeptide reads, in one-letter code: Pseudouridine-5'-phosphate glycosidase (307 aa).

Glu-25 serves as the catalytic Proton donor. Substrate contacts are provided by Lys-86 and Val-106. Residue Asp-138 participates in Mn(2+) binding. Ser-140–Asp-142 is a binding site for substrate. The active-site Nucleophile is the Lys-159.

Belongs to the pseudouridine-5'-phosphate glycosidase family. In terms of assembly, homotrimer. Mn(2+) is required as a cofactor.

The catalysed reaction is D-ribose 5-phosphate + uracil = psi-UMP + H2O. In terms of biological role, catalyzes the reversible cleavage of pseudouridine 5'-phosphate (PsiMP) to ribose 5-phosphate and uracil. Functions biologically in the cleavage direction, as part of a pseudouridine degradation pathway. This is Pseudouridine-5'-phosphate glycosidase from Caldanaerobacter subterraneus subsp. tengcongensis (strain DSM 15242 / JCM 11007 / NBRC 100824 / MB4) (Thermoanaerobacter tengcongensis).